Consider the following 799-residue polypeptide: Protein scabrous (799 aa).

The signal sequence occupies residues 1–51; it reads MRDWQTFPDLQKKKVSRDHLNCPATMAGSNVLWPILLAVVLLQISVAFVSG. A disordered region spans residues 287–316; sequence TRKDGSSASVEEESGSQEANQEQTGLETTA. N-linked (GlcNAc...) asparagine glycosylation occurs at Asn372. Residues 489–498 show a composition bias toward basic residues; it reads LNKPHKRPHH. Residues 489–509 are disordered; it reads LNKPHKRPHHQNVQAQMPQDD. A Fibrinogen C-terminal domain is found at 533-737; sequence AIINKLPHDC…SSRMLVKRLP (205 aa). Cys542 and Cys568 are joined by a disulfide. N-linked (GlcNAc...) asparagine glycosylation is found at Asn587, Asn618, and Asn660. Cysteines 687 and 700 form a disulfide. Asn744 and Asn787 each carry an N-linked (GlcNAc...) asparagine glycan.

Possesses five pairs of dibasic residues that may be the target of proteolytic processing.

The protein localises to the late endosome. Its function is as follows. Involved in regulation of neurogenesis. May encode a lateral inhibitor of R8 differentiation. In conjunction with Gp150, promotes Notch activation in response to Delta by regulating acquisition of insensitivity to Delta in a subset of cells. The polypeptide is Protein scabrous (sca) (Drosophila melanogaster (Fruit fly)).